A 1990-amino-acid chain; its full sequence is Protein TANC2 (1990 aa).

2 disordered regions span residues 1-85 (MFRN…SVDE) and 129-149 (SPCSTLTSSTASPPASSPCST). A phosphoserine mark is found at Ser-169, Ser-238, Ser-294, and Ser-400. A disordered region spans residues 396-442 (IASDSPHASPKHVDANRELPLTQPPSAHSSITSGSCPGTPEMRRRQE). The segment covering 419 to 431 (PPSAHSSITSGSC) has biased composition (polar residues). ANK repeat units follow at residues 846 to 878 (EGLSMALASLRNLYTPNIKVSRLLILGGANINY), 884 to 913 (NNAPILCVQSHLGYTEMVALLLEFGANVDA), 917 to 946 (SGLTPLGYAAAAGYLSIVVLLCKKRAKVDH), 950 to 979 (NGQCALVHAALRGHLEVVKFLIQCDWTMAG), 990 to 1019 (AIQQALIAAASMGYTEIVSYLLDLPEKDEE), 1033 to 1062 (WGETALTAAAGRGKLEVCRLLLEQGAAVAQ), 1066 to 1095 (RGAVPLFSTVRQGHWQIVDLLLTHGADVNM), 1099 to 1128 (QGRTPLMMAASEGHLGTVDFLLAQGASIAL), 1132 to 1161 (EGLTALSWACLKGHLSVVRSLVDNGAATDH), 1165 to 1194 (NGRTPLDLAAFYGDAEVVQFLVDHGAMIEH), and 1198 to 1227 (SGMRPLDRAVGCRNTSVVVTLLKKGAKIGP). 3 TPR repeats span residues 1244 to 1277 (LSKLMEEGDMFYKKGKVKEAAQRYQYALKKFPRE), 1291 to 1324 (VSLLLNLSRCRRKMNDFGMAEEFATKALELKPKS), and 1325 to 1358 (YEAYYARARAKRSSRQFAAALEDLNEAIKLCPNN). 3 disordered regions span residues 1372–1401 (CRQMQQPQQPPPPPQPQQQLPEEAEPEPQH), 1430–1586 (EARP…KMAQ), and 1692–1718 (LTKEDLPQRPSSAYRGGVRYSQTPQIG). Phosphoserine is present on residues Ser-1442 and Ser-1458. The segment covering 1469–1498 (RSSSSVGSPTRQTYQSTSPALSPTHQNSHY) has biased composition (polar residues). Ser-1530 and Ser-1545 each carry phosphoserine. The segment covering 1553–1572 (VYRSQSGSPVRYQQETSVSQ) has biased composition (polar residues). 2 positions are modified to asymmetric dimethylarginine: Arg-1563 and Arg-1576. At Ser-1579 the chain carries Phosphoserine. Phosphoserine is present on Ser-1722. Over residues 1783–1798 (SPSSNSISSTSNLTPT) the composition is skewed to low complexity. Disordered regions lie at residues 1783 to 1803 (SPSSNSISSTSNLTPTFRPSS) and 1821 to 1843 (DELSPVSPTQGGYPSEPTRSRTT). Residues Ser-1824 and Ser-1827 each carry the phosphoserine modification. A glycan (N-linked (GlcNAc...) asparagine) is linked at Asn-1928. A disordered region spans residues 1968-1990 (SRDSRQGQTSPIKPKRPFVESNV).

It belongs to the TANC family. In terms of assembly, interacts with KIF1A; the interaction decreases in presence of calcium.

Its subcellular location is the cell projection. It is found in the dendritic spine. Scaffolding protein in the dendritic spines which acts as immobile postsynaptic posts able to recruit KIF1A-driven dense core vesicles to dendritic spines. The protein is Protein TANC2 (TANC2) of Homo sapiens (Human).